The following is a 426-amino-acid chain: Glutamate-1-semialdehyde 2,1-aminomutase (426 aa).

Lys-264 carries the post-translational modification N6-(pyridoxal phosphate)lysine.

This sequence belongs to the class-III pyridoxal-phosphate-dependent aminotransferase family. HemL subfamily. It depends on pyridoxal 5'-phosphate as a cofactor.

It localises to the cytoplasm. The catalysed reaction is (S)-4-amino-5-oxopentanoate = 5-aminolevulinate. The protein operates within porphyrin-containing compound metabolism; protoporphyrin-IX biosynthesis; 5-aminolevulinate from L-glutamyl-tRNA(Glu): step 2/2. This Methanocella arvoryzae (strain DSM 22066 / NBRC 105507 / MRE50) protein is Glutamate-1-semialdehyde 2,1-aminomutase.